The following is a 120-amino-acid chain: UPF0231 protein NT01EI_0766 (120 aa).

Belongs to the UPF0231 family.

This chain is UPF0231 protein NT01EI_0766, found in Edwardsiella ictaluri (strain 93-146).